A 430-amino-acid chain; its full sequence is Ribosomal protein uS12 methylthiotransferase RimO (430 aa).

One can recognise an MTTase N-terminal domain in the interval 1-116 (MKIGIKVLGC…IAEAIEKATP (116 aa)). [4Fe-4S] cluster is bound by residues Cys-10, Cys-46, Cys-79, Cys-146, Cys-150, and Cys-153. In terms of domain architecture, Radical SAM core spans 132–362 (SCNNSFAYVK…LIFQSQIAYE (231 aa)). The 66-residue stretch at 365 to 430 (KRFVGKNLNV…DEYDLKGELI (66 aa)) folds into the TRAM domain.

Belongs to the methylthiotransferase family. RimO subfamily. [4Fe-4S] cluster is required as a cofactor.

The protein resides in the cytoplasm. It catalyses the reaction L-aspartate(89)-[ribosomal protein uS12]-hydrogen + (sulfur carrier)-SH + AH2 + 2 S-adenosyl-L-methionine = 3-methylsulfanyl-L-aspartate(89)-[ribosomal protein uS12]-hydrogen + (sulfur carrier)-H + 5'-deoxyadenosine + L-methionine + A + S-adenosyl-L-homocysteine + 2 H(+). Catalyzes the methylthiolation of an aspartic acid residue of ribosomal protein uS12. This chain is Ribosomal protein uS12 methylthiotransferase RimO, found in Pseudothermotoga lettingae (strain ATCC BAA-301 / DSM 14385 / NBRC 107922 / TMO) (Thermotoga lettingae).